Reading from the N-terminus, the 158-residue chain is Protein-export protein SecB (158 aa).

Belongs to the SecB family. Homotetramer, a dimer of dimers. One homotetramer interacts with 1 SecA dimer.

It is found in the cytoplasm. Its function is as follows. One of the proteins required for the normal export of preproteins out of the cell cytoplasm. It is a molecular chaperone that binds to a subset of precursor proteins, maintaining them in a translocation-competent state. It also specifically binds to its receptor SecA. The protein is Protein-export protein SecB of Anaplasma phagocytophilum (strain HZ).